The primary structure comprises 399 residues: RNA-binding protein cabeza (399 aa).

Positions 1–12 (MERGGYGGGSGQ) are enriched in gly residues. Positions 1–82 (MERGGYGGGS…RGGNSYGNGG (82 aa)) are disordered. The span at 24–34 (YQQMPNKTGNY) shows a compositional bias: polar residues. Positions 43–69 (KQGGGYDSGSGHRGSGGSGNGGGGGGS) are enriched in gly residues. The RRM domain maps to 120 to 206 (DTIFVSGMDP…NAIKVSLAQR (87 aa)). 2 disordered regions span residues 209–276 (NWNK…QPRD) and 300–399 (TPKG…SRPY). The segment covering 212–271 (KGGGGGGGGGGRGGFGGRRGGGGGGGGGGGGGGRFDRGGGGGGGRYDRGGGGGGGGGGGN) has biased composition (gly residues). The RanBP2-type zinc-finger motif lies at 275–304 (RDGDWKCNSCNNTNFAWRNECNRCKTPKGD). Gly residues-rich tracts occupy residues 308-339 (SSGG…GGGY), 347-361 (NSQG…GGGY), and 368-380 (NGGG…GGGG). Over residues 387–399 (PMRNDGGMRSRPY) the composition is skewed to low complexity.

It belongs to the RRM TET family. Ubiquitous. Enriched in the brain and central nervous system during embryogenesis. Enriched in the adult head. Embryos contain both isoforms A and B, whereas later in development (heads and torsos) only isoform B is detected.

The protein localises to the nucleus. Its function is as follows. May participate in a function common to the expression of most genes transcribed by RNA polymerase II. The protein is RNA-binding protein cabeza (caz) of Drosophila melanogaster (Fruit fly).